The following is a 525-amino-acid chain: MSQDIHAHRILILDFGSQYTQLIARRVREIGVYCEIHPFDMSNEAIIAFAPRGIILAGGPESVHEADSPRAPQAVFDLKVPLFGICYGMQTMAEQMGGKVQGSDLREFGYARVDVVGKARLLDGIEDHVDDDGVLGLDVWMSHGDKVTEMPAGFHILASTPSCPIAAMADDARAYYGVQFHPEVTHTKQGLRILSRFVLDICGCAALWTPSNIVDDAIATVRAQVGSSKVLLGLSGGVDSSVVAALLHKAIGDQLTCVFVDNGLLRLHEGDQVMAMFAENMGVKVIRANAEDKFLGRLAGVADPEEKRKIIGRTFIEVFDEEATKLQDVKFLAQGTIYPDVIESAGAKTGKAHVIKSHHNVGGLPEDMQFELVEPLRELFKDEVRKIGLELGLPYDMVYRHPFPGPGLGVRILGEVKKEYADLLRQADHIFIEELRAFDWYHKTSQAFVVFQPVKSVGVVGDGRRYAWVVALRAVETIDFMTARWAHLPYELLEKVSNRIINEIAGISRVTYDVSSKPPATIEWE.

In terms of domain architecture, Glutamine amidotransferase type-1 spans 9 to 207; sequence RILILDFGSQ…VLDICGCAAL (199 aa). C86 functions as the Nucleophile in the catalytic mechanism. Residues H181 and E183 contribute to the active site. Residues 208–400 enclose the GMPS ATP-PPase domain; that stretch reads WTPSNIVDDA…LGLPYDMVYR (193 aa). 235-241 is an ATP binding site; that stretch reads SGGVDSS.

In terms of assembly, homodimer.

The enzyme catalyses XMP + L-glutamine + ATP + H2O = GMP + L-glutamate + AMP + diphosphate + 2 H(+). It participates in purine metabolism; GMP biosynthesis; GMP from XMP (L-Gln route): step 1/1. In terms of biological role, catalyzes the synthesis of GMP from XMP. This chain is GMP synthase [glutamine-hydrolyzing], found in Pseudomonas aeruginosa (strain LESB58).